A 211-amino-acid chain; its full sequence is MHSIAIFGGTFDPVHNGHIKTSLAIQANFGFDSYYFLPCKSPAIKPPSFASSEQRVEMLKLALKPYPDFKIDTRELDRDTPSYMVYTLQSFRQEYTDSSLTLIIGYDGLLNLPQWYQWEKIISLANLLVINREEFFQKPVPKSVQTLLNQYRNDDKNILLNHHAGSICLYNAGHYDISSTKIREQLKQHKDVKNNLPDLVYDYIKKQELYQ.

It belongs to the NadD family.

It catalyses the reaction nicotinate beta-D-ribonucleotide + ATP + H(+) = deamido-NAD(+) + diphosphate. Its pathway is cofactor biosynthesis; NAD(+) biosynthesis; deamido-NAD(+) from nicotinate D-ribonucleotide: step 1/1. Functionally, catalyzes the reversible adenylation of nicotinate mononucleotide (NaMN) to nicotinic acid adenine dinucleotide (NaAD). The chain is Probable nicotinate-nucleotide adenylyltransferase from Legionella pneumophila (strain Lens).